Consider the following 779-residue polypeptide: Pleckstrin homology domain-containing family A member 4 (779 aa).

The 100-residue stretch at 54 to 153 folds into the PH domain; sequence PVHIRGWLHK…WLRALGRASR (100 aa). Disordered stretches follow at residues 152–352, 492–670, and 691–764; these read SRAE…LPGP, AGLG…EGHR, and MTGG…LPQD. Residue serine 164 is modified to Phosphoserine. Residues 184-193 show a composition bias toward basic and acidic residues; the sequence is SRGEEGRISE. Residues 315–332 are compositionally biased toward polar residues; sequence QHWSQEPRTQAHSGSPTY. Low complexity predominate over residues 525–535; the sequence is PESLELSSPRS. The segment covering 536-551 has biased composition (basic and acidic residues); that stretch reads PETDWGRPPGGDKDLA. Serine 559 carries the phosphoserine modification. Residues 594–603 are compositionally biased toward basic and acidic residues; the sequence is QLERMRRNQE. Residues 647–663 show a composition bias toward polar residues; that stretch reads LRSSGSWSSPRNTTPYL. The span at 704-724 shows a compositional bias: pro residues; that stretch reads PGVPLPPSDPTRQETPPPRSP.

As to expression, highly expressed in melanoma. Detected at low levels in heart, skeletal muscle, kidney, liver and small intestine.

It is found in the cytoplasm. The protein localises to the membrane. In terms of biological role, binds specifically to phosphatidylinositol 3-phosphate (PtdIns3P), but not to other phosphoinositides. This Homo sapiens (Human) protein is Pleckstrin homology domain-containing family A member 4 (PLEKHA4).